Here is a 176-residue protein sequence, read N- to C-terminus: Late embryogenesis abundant protein 49 (176 aa).

SMP domains lie at T49–K106 and N115–H171.

This sequence belongs to the LEA type SMP family.

It localises to the cytoplasm. The protein localises to the nucleus. Functionally, LEA proteins are late embryonic proteins abundant in higher plant seed embryos. The function of those proteins is not known. The polypeptide is Late embryogenesis abundant protein 49 (Arabidopsis thaliana (Mouse-ear cress)).